A 198-amino-acid chain; its full sequence is MSNRGQLSIEMVILVLAVLVSGSYVALDLSKGAFETTAVNDVQESSYCGFTPDFGATSIDKALVKLTTGIININPNAAVTNNEFNATYTNTTDNTVVTYSLDNVHPNLIKNYADGTIVKVPLNETWKNFTASNIILRMKSDYVCTINGENVSMESNCFEITAPLGSDSFDFQMSAGTGAGQYYLRLVDQEVTIEFSLE.

Residues 1 to 5 constitute a propeptide that is removed on maturation; sequence MSNRG. A QXSXEXXXL motif is present at residues 6 to 14; sequence QLSIEMVIL.

The N-terminus is probably cleaved by the prepilin peptidase EppA, which recognizes the class III signal sequence.

The protein localises to the secreted. It is found in the cell surface. The protein resides in the fimbrium. The protein is Probable minor pilin MMP0709 of Methanococcus maripaludis (strain DSM 14266 / JCM 13030 / NBRC 101832 / S2 / LL).